Consider the following 534-residue polypeptide: MAQQGKILKEQKYDRQLRLWGDHGQEALESAHVCLINATATGTEILKNLVLPGIGSFTIIDGNQVSGEDVGNNFFLQKCSIGKNRAQAAMEFLQELNSDVSGSFVEESPENLLDNDPSFFCRFTIVVATQLLESTLLRLADVLWNSQIPLLICRTYGLVGYMRIIIKEHPVIESHPDNALEDLRLDKPFPELREHFQSYDLDHMEKKDHSHTPWIVIIAKYLAQWYSETNGRIPKSYKEKEDFRELIRQGILKNENGAPEDEENFEEAIKNVNTALNTTQIPSSIEDIFNDDRCINITKQTPSFWILARALKEFVAKEGQGNLPVRGTIPDMIADSNKYIKLQNVYREKAKKDAAAVGNHVAKLLQSCGQAPESISEKELKLLCSNSAFLRVVRCRSLAEEYGLHTVNKDEIISSMDNPDNEIVLYLMLRAVDRFHKQHGRYPGVSNYQVEEDIGKLKSCLTGFLQEYGLSVMVKDDYVHEFCRYGAAEPHTVAAFLGGAAAQEVIKIITKQFVIFNNTYIYSGMSQTSATFQL.

Position 2 is an N-acetylalanine (A2). 2 positions are modified to N6-acetyllysine: K6 and K341. An interaction with UBA3 region spans residues 331 to 344; the sequence is DMIADSNKYIKLQN.

Belongs to the ubiquitin-activating E1 family. ULA1 subfamily. In terms of assembly, heterodimer of UBA3 and NAE1. The complex binds NEDD8 and UBE2M. Binds APP and TP53BP2. In terms of processing, ubiquitinated by TRIP12, leading to its degradation by the proteasome. In terms of tissue distribution, expressed throughout the brain. In hippocampus, strongly expressed in granule cells and in the pyramidal cell layer. Strongly expressed in the piriform cortex. In the cerebellum, expressed only in Purkinje cells.

The protein resides in the cell membrane. It participates in protein modification; protein neddylation. Its activity is regulated as follows. Binding of TP53BP2 to the regulatory subunit NAE1 decreases neddylation activity. In terms of biological role, regulatory subunit of the dimeric UBA3-NAE1 E1 enzyme. E1 activates NEDD8 by first adenylating its C-terminal glycine residue with ATP, thereafter linking this residue to the side chain of the catalytic cysteine, yielding a NEDD8-UBA3 thioester and free AMP. E1 finally transfers NEDD8 to the catalytic cysteine of UBE2M. Necessary for cell cycle progression through the S-M checkpoint. Overexpression of NAE1 causes apoptosis through deregulation of NEDD8 conjugation. The covalent attachment of NEDD8 to target proteins is known as 'neddylation' and the process is involved in the regulation of cell growth, viability and development. The sequence is that of NEDD8-activating enzyme E1 regulatory subunit (Nae1) from Rattus norvegicus (Rat).